Reading from the N-terminus, the 185-residue chain is MINDIKKDAQDRMGKSIEALGRNLASIRTGRAHPSILDSVKVPAWGSEMPLNQVAAVSVEDARTLKIVAHDKNLSAAIEKAILTSDLGLNPSSAGTTIRVPMPALTEETRKGYTKQASAVAEDAKVAVRNVRRDALADLKKLTKDKEISEDEERRAADEIQKLTDKFVAEIDAAFKAKEKDLLAV.

Belongs to the RRF family.

It is found in the cytoplasm. Its function is as follows. Responsible for the release of ribosomes from messenger RNA at the termination of protein biosynthesis. May increase the efficiency of translation by recycling ribosomes from one round of translation to another. This is Ribosome-recycling factor from Pseudomonas putida (strain W619).